A 242-amino-acid chain; its full sequence is Ribonuclease 3 (242 aa).

In terms of domain architecture, RNase III spans 7–136 (LEALQNLLGY…LLASIYLDGG (130 aa)). E49 lines the Mg(2+) pocket. D53 is an active-site residue. D122 and E125 together coordinate Mg(2+). The active site involves E125. The 70-residue stretch at 167–236 (DYKTQLQELT…AEKALQIIAA (70 aa)) folds into the DRBM domain.

It belongs to the ribonuclease III family. As to quaternary structure, homodimer. Requires Mg(2+) as cofactor.

It localises to the cytoplasm. It carries out the reaction Endonucleolytic cleavage to 5'-phosphomonoester.. Its function is as follows. Digests double-stranded RNA. Involved in the processing of primary rRNA transcript to yield the immediate precursors to the large and small rRNAs (23S and 16S). Processes some mRNAs, and tRNAs when they are encoded in the rRNA operon. Processes pre-crRNA and tracrRNA of type II CRISPR loci if present in the organism. This is Ribonuclease 3 from Syntrophobacter fumaroxidans (strain DSM 10017 / MPOB).